The sequence spans 200 residues: Small ribosomal subunit protein uS4 (200 aa).

Residues threonine 22 to lysine 43 form a disordered region. The 79-residue stretch at glutamine 92–glutamate 170 folds into the S4 RNA-binding domain.

It belongs to the universal ribosomal protein uS4 family. Part of the 30S ribosomal subunit. Contacts protein S5. The interaction surface between S4 and S5 is involved in control of translational fidelity.

Functionally, one of the primary rRNA binding proteins, it binds directly to 16S rRNA where it nucleates assembly of the body of the 30S subunit. With S5 and S12 plays an important role in translational accuracy. The polypeptide is Small ribosomal subunit protein uS4 (Listeria innocua serovar 6a (strain ATCC BAA-680 / CLIP 11262)).